A 309-amino-acid chain; its full sequence is Putative taste receptor type 2 member 36 (309 aa).

Position 1 (methionine 1) is a topological domain, extracellular. The helical transmembrane segment at 2-22 (ICFLLIILSILVVFAFVLGNF) threads the bilayer. Topologically, residues 23–46 (SNGFIALVNVIDWVKRQKISSADQ) are cytoplasmic. A helical transmembrane segment spans residues 47 to 67 (ILTALVVSRVGLLWVILLHWY). Residues 68 to 79 (SNVLNSALYSSE) lie on the Extracellular side of the membrane. A helical membrane pass occupies residues 80–100 (VIIFISNAWAIINHFSIWLAT). Over 101–126 (SLSIFYLLKIVNFSRLIFHHLKRKAK) the chain is Cytoplasmic. A helical membrane pass occupies residues 127–147 (SVVLVIVLGPLVFLVCHLVMK). The Extracellular segment spans residues 148 to 181 (HTYINVWTKEYEGNVTWKIKLRNAIHLSNLTVST). 2 N-linked (GlcNAc...) asparagine glycosylation sites follow: asparagine 161 and asparagine 176. A helical membrane pass occupies residues 182 to 202 (LANLIPFTLTLISFLLLIYSL). Topologically, residues 203-229 (CKHLKKMQLHGKGSQDPSTKVHIKALQ) are cytoplasmic. The chain crosses the membrane as a helical span at residues 230 to 250 (TVTSFLLLCAIYFLSMIISVC). Over 251–259 (NFGRLEKQP) the chain is Extracellular. Residues 260 to 280 (VFMFCQAIIFSYPSTHPFILI) form a helical membrane-spanning segment. At 281–309 (LGNKKLKQIFLSVFWQMRYWVKGEKPSSP) the chain is on the cytoplasmic side.

This sequence belongs to the G-protein coupled receptor T2R family.

The protein localises to the membrane. In terms of biological role, putative taste receptor which may play a role in the perception of bitterness. This is Putative taste receptor type 2 member 36 from Homo sapiens (Human).